The sequence spans 345 residues: Hydroxymethylglutaryl-CoA synthase (345 aa).

Asp28 lines the (3S)-3-hydroxy-3-methylglutaryl-CoA pocket. Glu80 (proton donor/acceptor) is an active-site residue. Cys112 and Thr153 together coordinate (3S)-3-hydroxy-3-methylglutaryl-CoA. Cys112 serves as the catalytic Acyl-thioester intermediate. Arg199 is a CoA binding site. Positions 201 and 234 each coordinate (3S)-3-hydroxy-3-methylglutaryl-CoA. The active-site Proton donor/acceptor is His234. Lys239 is a CoA binding site. Positions 243, 266, and 296 each coordinate (3S)-3-hydroxy-3-methylglutaryl-CoA.

It belongs to the thiolase-like superfamily. Archaeal HMG-CoA synthase family. In terms of assembly, interacts with acetoacetyl-CoA thiolase that catalyzes the precedent step in the pathway and with a DUF35 protein. The acetoacetyl-CoA thiolase/HMG-CoA synthase complex channels the intermediate via a fused CoA-binding site, which allows for efficient coupling of the endergonic thiolase reaction with the exergonic HMGCS reaction.

It catalyses the reaction acetoacetyl-CoA + acetyl-CoA + H2O = (3S)-3-hydroxy-3-methylglutaryl-CoA + CoA + H(+). Its pathway is metabolic intermediate biosynthesis; (R)-mevalonate biosynthesis; (R)-mevalonate from acetyl-CoA: step 2/3. In terms of biological role, catalyzes the condensation of acetyl-CoA with acetoacetyl-CoA to form 3-hydroxy-3-methylglutaryl-CoA (HMG-CoA). Functions in the mevalonate (MVA) pathway leading to isopentenyl diphosphate (IPP), a key precursor for the biosynthesis of isoprenoid compounds that are building blocks of archaeal membrane lipids. In Methanobrevibacter smithii (strain ATCC 35061 / DSM 861 / OCM 144 / PS), this protein is Hydroxymethylglutaryl-CoA synthase.